The following is a 92-amino-acid chain: Elongation factor 1-beta (92 aa).

It belongs to the EF-1-beta/EF-1-delta family.

Functionally, promotes the exchange of GDP for GTP in EF-1-alpha/GDP, thus allowing the regeneration of EF-1-alpha/GTP that could then be used to form the ternary complex EF-1-alpha/GTP/AAtRNA. This Pyrobaculum aerophilum (strain ATCC 51768 / DSM 7523 / JCM 9630 / CIP 104966 / NBRC 100827 / IM2) protein is Elongation factor 1-beta (ef1b).